We begin with the raw amino-acid sequence, 185 residues long: Ribosome-recycling factor (185 aa).

The protein belongs to the RRF family.

The protein resides in the cytoplasm. Responsible for the release of ribosomes from messenger RNA at the termination of protein biosynthesis. May increase the efficiency of translation by recycling ribosomes from one round of translation to another. The chain is Ribosome-recycling factor from Enterobacter sp. (strain 638).